The sequence spans 195 residues: Putative 3-methyladenine DNA glycosylase (195 aa).

Belongs to the DNA glycosylase MPG family.

This chain is Putative 3-methyladenine DNA glycosylase, found in Synechococcus sp. (strain JA-3-3Ab) (Cyanobacteria bacterium Yellowstone A-Prime).